The primary structure comprises 628 residues: MTWSQDLAHKTYSIRHWADGYFEVNDAGHMVVMPLGGDGVRISLPEVVDAARAAGAKLPLLLRFPDILRHRLGKLQAAFVQAQSEWEYAGGYTAVYPIKVNQHRGVAGVLASHQGDGFGLEAGSKPELMAVLALSRQGGLIVCNGYKDREYIRLALIGRKLGLKTFIVIEKPSELRMVLEEAKTLGVLPGLGVRVRLASLGAGKWQNSGGDKAKFGLSPRQVLDVWKVLRGTEYADCLNVMHFHMGSQISNVRDIAKGMREATRYFVELSRLGAKITHVDVGGGLGIDYEGTRSRSDCSINYGLQAYASHIVQPLASACEDYDLVPPRIVTECGRAMTAHHAVLIANVTEVEAVPEGRVPGLCDDEPAVVRHMREIYGELDARPAIELFYEAQHFHAEGLAAYTLGQIDLVHRARIDDLFYAISHGVRERLSHEEKSHRPVLDELNERLVDKYFVNFSVFESIPDVWAINQIFPIVPIERLNEAPTRRGVVCDLTCDSDGTVKQYVENESLDSALPLHVLRHGEAYRIGFFLVGAYQEILGDIHNLFGDTDAVEVAVDGRGYRIAQQRCGDTTDVMLDYVGYALDEVRRVYAQRITAAGMSAAESKALSDMLEAGLTGYPYLSDVPLE.

At Lys-99 the chain carries N6-(pyridoxal phosphate)lysine. 279–289 is a binding site for substrate; sequence VDVGGGLGIDY.

This sequence belongs to the Orn/Lys/Arg decarboxylase class-II family. SpeA subfamily. It depends on Mg(2+) as a cofactor. The cofactor is pyridoxal 5'-phosphate.

The enzyme catalyses L-arginine + H(+) = agmatine + CO2. Its pathway is amine and polyamine biosynthesis; agmatine biosynthesis; agmatine from L-arginine: step 1/1. Functionally, catalyzes the biosynthesis of agmatine from arginine. The sequence is that of Biosynthetic arginine decarboxylase from Xylella fastidiosa (strain M12).